The sequence spans 218 residues: Guanylate kinase (218 aa).

The 184-residue stretch at 5 to 188 (GNLFILSAPS…ALLDLTTIVN (184 aa)) folds into the Guanylate kinase-like domain. 12–19 (APSGAGKS) contributes to the ATP binding site.

It belongs to the guanylate kinase family.

It is found in the cytoplasm. The catalysed reaction is GMP + ATP = GDP + ADP. Functionally, essential for recycling GMP and indirectly, cGMP. The chain is Guanylate kinase from Colwellia psychrerythraea (strain 34H / ATCC BAA-681) (Vibrio psychroerythus).